An 89-amino-acid chain; its full sequence is UPF0237 protein LMOf2365_0562 (89 aa).

One can recognise an ACT domain in the interval 4–78; sequence VLTVIGKDNV…EDLQVKIHIQ (75 aa).

Belongs to the UPF0237 family.

In Listeria monocytogenes serotype 4b (strain F2365), this protein is UPF0237 protein LMOf2365_0562.